Consider the following 1515-residue polypeptide: Neurite extension and migration factor (1515 aa).

Over residues 381 to 405 (DKKKGKEEVHEDKSIETKDEKDNGE) the composition is skewed to basic and acidic residues. Disordered stretches follow at residues 381 to 415 (DKKKGKEEVHEDKSIETKDEKDNGEKPALNNKPCG), 505 to 529 (VNERKEWPPGGSKEEDDDEWCPKKR), 731 to 774 (KKIK…HMSE), 1158 to 1225 (FDEP…TKKG), 1372 to 1422 (TPQE…EDSR), and 1435 to 1479 (TLGN…AGTT). Polar residues-rich tracts occupy residues 746–757 (SPVSEDTSSKAN) and 763–772 (TPGTSNSSHM). The segment covering 1180 to 1193 (PGKSGAVSQSSSQK) has biased composition (low complexity). Residues 1442–1452 (THKKLYRHKSS) are compositionally biased toward basic residues. Residues 1455–1479 (GLRDEKYKGKRVEREQAHKDEAGTT) show a composition bias toward basic and acidic residues.

In terms of tissue distribution, expressed in the brain, particularly during the late embryonic and perinatal stages of development. In the developing brain, it is expressed only in the cortical plate and subplate region but not in the intermediate or ventricular zone.

The protein localises to the nucleus. Its subcellular location is the cytoplasm. Involved in neurite outgrowth by regulating cell-cell adhesion via the N-cadherin signaling pathway. May act by regulating expression of protein-coding genes, such as N-cadherins and integrin beta-1 (ITGB1). In Mus musculus (Mouse), this protein is Neurite extension and migration factor.